A 424-amino-acid chain; its full sequence is Serine--tRNA ligase (424 aa).

The tract at residues 109–129 is disordered; it reads QEDVPYGESEEDNREERKWGD. Residue 231 to 233 participates in L-serine binding; it reads TAE. Residue 262–264 participates in ATP binding; that stretch reads RSE. E285 serves as a coordination point for L-serine. 349-352 serves as a coordination point for ATP; it reads EISS. Residue S385 coordinates L-serine.

It belongs to the class-II aminoacyl-tRNA synthetase family. Type-1 seryl-tRNA synthetase subfamily. As to quaternary structure, homodimer. The tRNA molecule binds across the dimer.

The protein localises to the cytoplasm. The catalysed reaction is tRNA(Ser) + L-serine + ATP = L-seryl-tRNA(Ser) + AMP + diphosphate + H(+). The enzyme catalyses tRNA(Sec) + L-serine + ATP = L-seryl-tRNA(Sec) + AMP + diphosphate + H(+). It functions in the pathway aminoacyl-tRNA biosynthesis; selenocysteinyl-tRNA(Sec) biosynthesis; L-seryl-tRNA(Sec) from L-serine and tRNA(Sec): step 1/1. Its function is as follows. Catalyzes the attachment of serine to tRNA(Ser). Is also able to aminoacylate tRNA(Sec) with serine, to form the misacylated tRNA L-seryl-tRNA(Sec), which will be further converted into selenocysteinyl-tRNA(Sec). In Shouchella clausii (strain KSM-K16) (Alkalihalobacillus clausii), this protein is Serine--tRNA ligase.